Here is a 514-residue protein sequence, read N- to C-terminus: Bifunctional lysine-specific demethylase and histidyl-hydroxylase NO66 (514 aa).

The segment at 1–53 (MKRGLEEEIEEMSEEEVGVNNNNNGKKKKKKVVKKSKPVPLTKSVPQVSSQPL) is disordered. Residues 7–17 (EEIEEMSEEEV) are compositionally biased toward acidic residues. The span at 25–37 (GKKKKKKVVKKSK) shows a compositional bias: basic residues. Residues 44–53 (SVPQVSSQPL) show a composition bias toward polar residues. The JmjC domain maps to 180–327 (CSVRLLNPQT…IGKVLNRALE (148 aa)). The Fe cation site is built by histidine 226, aspartate 228, and histidine 291.

Belongs to the ROX family. NO66 subfamily. Fe(2+) is required as a cofactor.

The protein localises to the nucleus. It catalyses the reaction N(6),N(6)-dimethyl-L-lysyl(36)-[histone H3] + 2 2-oxoglutarate + 2 O2 = L-lysyl(36)-[histone H3] + 2 formaldehyde + 2 succinate + 2 CO2. Functionally, oxygenase that can act as both a histone lysine demethylase and a ribosomal histidine hydroxylase. Specifically demethylates 'Lys-4' (H3K4me) and 'Lys-36' (H3K36me) of histone H3, thereby playing a central role in histone code. This chain is Bifunctional lysine-specific demethylase and histidyl-hydroxylase NO66 (jcdg), found in Dictyostelium discoideum (Social amoeba).